The primary structure comprises 266 residues: Ankyrin repeat domain-containing protein 45 (266 aa).

Acidic residues-rich tracts occupy residues methionine 1 to serine 11 and glutamine 18 to glutamate 32. The disordered stretch occupies residues methionine 1–alanine 43. 2 ANK repeats span residues valine 76–glutamate 105 and arginine 109–alanine 138.

It is found in the cytoplasm. It localises to the midbody. The protein resides in the midbody ring. The protein localises to the cleavage furrow. Its function is as follows. May play a role during cell division. The protein is Ankyrin repeat domain-containing protein 45 of Homo sapiens (Human).